Reading from the N-terminus, the 151-residue chain is NADPH-dependent 7-cyano-7-deazaguanine reductase (151 aa).

Cys-49 acts as the Thioimide intermediate in catalysis. Catalysis depends on Asp-56, which acts as the Proton donor. Substrate-binding positions include 71–73 (IES) and 90–91 (HE).

It belongs to the GTP cyclohydrolase I family. QueF type 1 subfamily.

It localises to the cytoplasm. It carries out the reaction 7-aminomethyl-7-carbaguanine + 2 NADP(+) = 7-cyano-7-deazaguanine + 2 NADPH + 3 H(+). It functions in the pathway tRNA modification; tRNA-queuosine biosynthesis. Catalyzes the NADPH-dependent reduction of 7-cyano-7-deazaguanine (preQ0) to 7-aminomethyl-7-deazaguanine (preQ1). The protein is NADPH-dependent 7-cyano-7-deazaguanine reductase of Caulobacter vibrioides (strain ATCC 19089 / CIP 103742 / CB 15) (Caulobacter crescentus).